The chain runs to 571 residues: Urease subunit alpha (571 aa).

One can recognise a Urease domain in the interval 134-571 (GAIDTHIHFI…LPMAQRYFLF (438 aa)). The Ni(2+) site is built by His139, His141, and Lys222. Lys222 carries the N6-carboxylysine modification. His224 contacts substrate. Ni(2+) contacts are provided by His251 and His277. His325 acts as the Proton donor in catalysis. Asp365 contributes to the Ni(2+) binding site.

This sequence belongs to the metallo-dependent hydrolases superfamily. Urease alpha subunit family. Heterotrimer of UreA (gamma), UreB (beta) and UreC (alpha) subunits. Three heterotrimers associate to form the active enzyme. Ni cation serves as cofactor. Post-translationally, carboxylation allows a single lysine to coordinate two nickel ions.

It localises to the cytoplasm. It catalyses the reaction urea + 2 H2O + H(+) = hydrogencarbonate + 2 NH4(+). It functions in the pathway nitrogen metabolism; urea degradation; CO(2) and NH(3) from urea (urease route): step 1/1. The polypeptide is Urease subunit alpha (Bordetella parapertussis (strain 12822 / ATCC BAA-587 / NCTC 13253)).